A 323-amino-acid chain; its full sequence is tRNA dimethylallyltransferase (323 aa).

18–25 (GPTASGKT) contributes to the ATP binding site. A substrate-binding site is contributed by 20-25 (TASGKT). Residues 44–47 (DSAL) are interaction with substrate tRNA.

It belongs to the IPP transferase family. In terms of assembly, monomer. Mg(2+) is required as a cofactor.

The catalysed reaction is adenosine(37) in tRNA + dimethylallyl diphosphate = N(6)-dimethylallyladenosine(37) in tRNA + diphosphate. In terms of biological role, catalyzes the transfer of a dimethylallyl group onto the adenine at position 37 in tRNAs that read codons beginning with uridine, leading to the formation of N6-(dimethylallyl)adenosine (i(6)A). This chain is tRNA dimethylallyltransferase, found in Blochmanniella floridana.